We begin with the raw amino-acid sequence, 462 residues long: MEKKYILYFLFLLPFFMILVIAETEEENPDDLIQLTVTRNKIMTAQYECYQKIMQDPIQQTEGIYCNRTWDGWLCWNDVAAGTESMQHCPDYFQDFDPSEKVTKICDQDGNWFRHPESNRTWTNYTQCNINTHEKVQTALNLFYLTIIGHGLSIASLLISLGIFFYFKSLSCQRITLHKNLFFSFVCNSIVTIIHLTAVANNQALVATNPVSCKVFQFIHLYLMGCNYFWMLCEGIYLHTLIVVAVFAEKQHLMWYYFLGWGFPLIPACIHAVARRLYYNDNCWISSDTHLLYIIHGPICAALLVNLFFLLNIVRVLITKLKVTHQAESNLYMKAVRATLILVPLLGIEFVLIPWRPEGKIAEEVYDYIMHILVHYQGLLVSTIYCFFNGEVQAILRRNWNQYKIQFGNSFSHSDALRSASYTVSTISDGAGYSHDYPSEHLNGKSIHDMENIVIKPEKLYD.

The signal sequence occupies residues 1 to 22; the sequence is MEKKYILYFLFLLPFFMILVIA. The Extracellular segment spans residues 23–140; that stretch reads ETEEENPDDL…NTHEKVQTAL (118 aa). 3 disulfides stabilise this stretch: C49-C75, C66-C106, and C89-C128. Residues N67, N119, and N124 are each glycosylated (N-linked (GlcNAc...) asparagine). A helical transmembrane segment spans residues 141–165; sequence NLFYLTIIGHGLSIASLLISLGIFF. At 166-176 the chain is on the cytoplasmic side; the sequence is YFKSLSCQRIT. The helical transmembrane segment at 177-199 threads the bilayer; that stretch reads LHKNLFFSFVCNSIVTIIHLTAV. Residues 200–210 lie on the Extracellular side of the membrane; that stretch reads ANNQALVATNP. A helical membrane pass occupies residues 211–239; sequence VSCKVFQFIHLYLMGCNYFWMLCEGIYLH. Topologically, residues 240 to 253 are cytoplasmic; that stretch reads TLIVVAVFAEKQHL. Residues 254–274 form a helical membrane-spanning segment; the sequence is MWYYFLGWGFPLIPACIHAVA. Topologically, residues 275–290 are extracellular; sequence RRLYYNDNCWISSDTH. Positions 289 to 290 are required for RAMP3 interaction; sequence TH. Residues 291 to 315 form a helical membrane-spanning segment; that stretch reads LLYIIHGPICAALLVNLFFLLNIVR. At 316-330 the chain is on the cytoplasmic side; sequence VLITKLKVTHQAESN. Residues 331–352 traverse the membrane as a helical segment; sequence LYMKAVRATLILVPLLGIEFVL. The Extracellular portion of the chain corresponds to 353 to 367; sequence IPWRPEGKIAEEVYD. The helical transmembrane segment at 368 to 388 threads the bilayer; it reads YIMHILVHYQGLLVSTIYCFF. Topologically, residues 389-462 are cytoplasmic; sequence NGEVQAILRR…IVIKPEKLYD (74 aa). S421 and S446 each carry phosphoserine.

The protein belongs to the G-protein coupled receptor 2 family. Heterodimer of CALCRL and RAMP1; the receptor complex functions as CGRP receptor. Heterodimer of CALCRL and RAMP2 or CALCRL and RAMP3; the complexes function as adrenomedullin receptor. Detected in lung and coronary artery.

The protein resides in the cell membrane. Its function is as follows. G protein-coupled receptor which specificity is determined by its interaction with receptor-activity-modifying proteins (RAMPs). Together with RAMP1, form the receptor complex for calcitonin-gene-related peptides CALCA/CGRP1 and CALCB/CGRP2. Together with RAMP2 or RAMP3, function as receptor complexes for adrenomedullin (ADM and ADM2). Ligand binding causes a conformation change that triggers signaling via guanine nucleotide-binding proteins (G proteins) and modulates the activity of downstream effectors. Activates cAMP-dependent pathway. This is Calcitonin gene-related peptide type 1 receptor (CALCRL) from Sus scrofa (Pig).